Consider the following 149-residue polypeptide: Transcription antitermination protein NusB (149 aa).

The protein belongs to the NusB family.

Its function is as follows. Involved in transcription antitermination. Required for transcription of ribosomal RNA (rRNA) genes. Binds specifically to the boxA antiterminator sequence of the ribosomal RNA (rrn) operons. This Chromobacterium violaceum (strain ATCC 12472 / DSM 30191 / JCM 1249 / CCUG 213 / NBRC 12614 / NCIMB 9131 / NCTC 9757 / MK) protein is Transcription antitermination protein NusB.